We begin with the raw amino-acid sequence, 2512 residues long: Isonitrile lipopeptide synthase (2512 aa).

2 consecutive Carrier domains span residues 935-1003 and 1984-2059; these read AAGL…PTPD and APAG…GRDA. 2 positions are modified to O-(pantetheine 4'-phosphoryl)serine: serine 963 and serine 2019. The region spanning 2112–2372 is the Thioester reductase (TE) domain; that stretch reads LTGATGFLGR…LPVTFVAEAI (261 aa).

Belongs to the ATP-dependent AMP-binding enzyme family. The cofactor is pantetheine 4'-phosphate.

The enzyme catalyses 2 a (3R)-3-isocyanyl-fatty acyl-[ACP] + L-lysine + ATP + 2 NADPH = an isonitrile lipopeptide + 2 holo-[ACP] + AMP + diphosphate + 2 NADP(+). Nonribosomal peptide synthetase (NRPS) involved in the biosynthesis of a unique class of isonitrile lipopeptides (INLPs) that seem to function as virulence factors in M.tuberculosis and to play a role in metal acquisition. Catalyzes the final step in the pathway, i.e. the condensation of a (3R)-3-isocyanyl-fatty acyl-[ACP] to both amino groups of a lysine, producing isonitrile lipopeptides. This Mycobacterium tuberculosis (strain ATCC 25618 / H37Rv) protein is Isonitrile lipopeptide synthase.